The chain runs to 227 residues: Ribonuclease 3 (227 aa).

The RNase III domain maps to 6 to 128 (ASDYQQRIGY…VIAAIYLDAD (123 aa)). Position 41 (glutamate 41) interacts with Mg(2+). Aspartate 45 is a catalytic residue. Residues aspartate 114 and glutamate 117 each coordinate Mg(2+). Residue glutamate 117 is part of the active site. The DRBM domain occupies 155–225 (DPKTRLQEWL…ASHAIDQLDS (71 aa)). Basic and acidic residues predominate over residues 203–212 (GEGSSRRLAE). The tract at residues 203 to 227 (GEGSSRRLAEQDAASHAIDQLDSNK) is disordered.

It belongs to the ribonuclease III family. As to quaternary structure, homodimer. Mg(2+) is required as a cofactor.

The protein localises to the cytoplasm. The catalysed reaction is Endonucleolytic cleavage to 5'-phosphomonoester.. Digests double-stranded RNA. Involved in the processing of primary rRNA transcript to yield the immediate precursors to the large and small rRNAs (23S and 16S). Processes some mRNAs, and tRNAs when they are encoded in the rRNA operon. Processes pre-crRNA and tracrRNA of type II CRISPR loci if present in the organism. The polypeptide is Ribonuclease 3 (Xylella fastidiosa (strain 9a5c)).